Reading from the N-terminus, the 227-residue chain is 7-cyano-7-deazaguanine synthase (227 aa).

Residue 7-17 (VSGGMDSLVAT) participates in ATP binding. Positions 187, 195, 198, and 201 each coordinate Zn(2+).

This sequence belongs to the QueC family. The cofactor is Zn(2+).

The enzyme catalyses 7-carboxy-7-deazaguanine + NH4(+) + ATP = 7-cyano-7-deazaguanine + ADP + phosphate + H2O + H(+). It participates in purine metabolism; 7-cyano-7-deazaguanine biosynthesis. In terms of biological role, catalyzes the ATP-dependent conversion of 7-carboxy-7-deazaguanine (CDG) to 7-cyano-7-deazaguanine (preQ(0)). The polypeptide is 7-cyano-7-deazaguanine synthase (Chlorobaculum tepidum (strain ATCC 49652 / DSM 12025 / NBRC 103806 / TLS) (Chlorobium tepidum)).